A 245-amino-acid chain; its full sequence is Chloride intracellular channel protein 2 (245 aa).

A required for insertion into the membrane region spans residues 1-96 (MASLALNTQA…EEFLEKTLAP (96 aa)). Residue E25 participates in glutathione binding. A G-site motif is present at residues 30-33 (CPFC). The cysteines at positions 30 and 33 are disulfide-linked. A helical membrane pass occupies residues 32–52 (FCQRLFMILWLKGVKFNVTTI). The region spanning 76–239 (NKELKTDFIK…PEDKEIENTY (164 aa)) is the GST C-terminal domain. H227 is a binding site for glutathione.

Belongs to the chloride channel CLIC family. Monomer. Interacts with TRAPPC2 and RYR2.

It localises to the cytoplasm. Its subcellular location is the membrane. The catalysed reaction is chloride(in) = chloride(out). It catalyses the reaction tert-butyl hydroperoxide + 2 glutathione = tert-butanol + glutathione disulfide + H2O. It carries out the reaction cumene hydroperoxide + 2 glutathione = 2-phenylpropan-2-ol + glutathione disulfide + H2O. In the soluble state, catalyzes glutaredoxin-like thiol disulfide exchange reactions with reduced glutathione as electron donor. Displays weak glutathione peroxidase activity. Can insert into membranes and form chloride ion channels. Membrane insertion seems to be redox-regulated and may occur only under oxidizing conditions. Modulates the activity of RYR2 and inhibits calcium influx. The polypeptide is Chloride intracellular channel protein 2 (Rattus norvegicus (Rat)).